The sequence spans 382 residues: Anhydro-N-acetylmuramic acid kinase (382 aa).

An ATP-binding site is contributed by 15-22; the sequence is GTSLDGVD.

It belongs to the anhydro-N-acetylmuramic acid kinase family.

The enzyme catalyses 1,6-anhydro-N-acetyl-beta-muramate + ATP + H2O = N-acetyl-D-muramate 6-phosphate + ADP + H(+). Its pathway is amino-sugar metabolism; 1,6-anhydro-N-acetylmuramate degradation. It participates in cell wall biogenesis; peptidoglycan recycling. Functionally, catalyzes the specific phosphorylation of 1,6-anhydro-N-acetylmuramic acid (anhMurNAc) with the simultaneous cleavage of the 1,6-anhydro ring, generating MurNAc-6-P. Is required for the utilization of anhMurNAc either imported from the medium or derived from its own cell wall murein, and thus plays a role in cell wall recycling. This Haemophilus influenzae (strain ATCC 51907 / DSM 11121 / KW20 / Rd) protein is Anhydro-N-acetylmuramic acid kinase.